A 99-amino-acid polypeptide reads, in one-letter code: Transmembrane protein 14A (99 aa).

Transmembrane regions (helical) follow at residues 1–21, 24–44, and 79–99; these read MDLI…LGYK, GGVL…YGAY, and PAGL…LLLL.

This sequence belongs to the TMEM14 family.

The protein localises to the mitochondrion membrane. The protein resides in the endoplasmic reticulum membrane. Its function is as follows. Inhibits apoptosis via negative regulation of the mitochondrial outer membrane permeabilization involved in apoptotic signaling pathway. The chain is Transmembrane protein 14A (TMEM14A) from Bos taurus (Bovine).